Here is a 228-residue protein sequence, read N- to C-terminus: Auxin-responsive protein IAA16 (228 aa).

The EAR-like (transcriptional repression) motif lies at 19–23; the sequence is LSLAL. Residues 28–39 are compositionally biased toward polar residues; the sequence is SSSGLQGNTSTA. Disordered stretches follow at residues 28–57 and 70–90; these read SSSGLQGNTSTAADGAKGNDGFKASRPAAP and NLASSSSSSKPPRGGRDAAAA. The PB1 domain maps to 97–214; the sequence is ARFVKVNMDG…RVLRSSDLNA (118 aa).

This sequence belongs to the Aux/IAA family. Homodimers and heterodimers. Expressed in roots, flowers and seedlings.

It is found in the nucleus. Functionally, aux/IAA proteins are short-lived transcriptional factors that function as repressors of early auxin response genes at low auxin concentrations. This chain is Auxin-responsive protein IAA16 (IAA16), found in Oryza sativa subsp. japonica (Rice).